The following is a 154-amino-acid chain: Myoglobin (154 aa).

Residues 2-148 form the Globin domain; sequence GLSDGEWQLV…FRNDIAAKYK (147 aa). Ser-4 bears the Phosphoserine mark. His-65 contacts nitrite. His-65 is a binding site for O2. Residues Thr-68 and Thr-75 each carry the phosphothreonine modification. Residue His-94 coordinates heme b. Residue Ser-121 is modified to Phosphoserine.

Belongs to the globin family. As to quaternary structure, monomeric.

It localises to the cytoplasm. Its subcellular location is the sarcoplasm. It catalyses the reaction Fe(III)-heme b-[protein] + nitric oxide + H2O = Fe(II)-heme b-[protein] + nitrite + 2 H(+). The catalysed reaction is H2O2 + AH2 = A + 2 H2O. In terms of biological role, monomeric heme protein which primary function is to store oxygen and facilitate its diffusion within muscle tissues. Reversibly binds oxygen through a pentacoordinated heme iron and enables its timely and efficient release as needed during periods of heightened demand. Depending on the oxidative conditions of tissues and cells, and in addition to its ability to bind oxygen, it also has a nitrite reductase activity whereby it regulates the production of bioactive nitric oxide. Under stress conditions, like hypoxia and anoxia, it also protects cells against reactive oxygen species thanks to its pseudoperoxidase activity. In Mus musculus (Mouse), this protein is Myoglobin.